The following is a 181-amino-acid chain: Photosystem I assembly protein Ycf4 (181 aa).

Helical transmembrane passes span tyrosine 19–serine 39 and isoleucine 61–leucine 81.

This sequence belongs to the Ycf4 family.

It localises to the plastid. The protein resides in the chloroplast thylakoid membrane. Seems to be required for the assembly of the photosystem I complex. This chain is Photosystem I assembly protein Ycf4, found in Thalassiosira pseudonana (Marine diatom).